The primary structure comprises 444 residues: Alanyl-tRNA editing protein Aarsd1 (444 aa).

Residues histidine 109 and histidine 113 each contribute to the Zn(2+) site. The residue at position 174 (serine 174) is a Phosphoserine. Residues cysteine 209 and histidine 213 each coordinate Zn(2+).

This sequence belongs to the class-II aminoacyl-tRNA synthetase family. Alax-L subfamily. The cofactor is Zn(2+).

It localises to the cytoplasm. In terms of biological role, functions in trans to edit the amino acid moiety from incorrectly charged tRNA(Ala). The protein is Alanyl-tRNA editing protein Aarsd1 (AARSD1) of Bos taurus (Bovine).